The chain runs to 292 residues: UPF0696 protein C11orf68 (292 aa).

Low complexity predominate over residues methionine 1–glycine 11. The segment at methionine 1–glycine 60 is disordered. Arginine 29 bears the Omega-N-methylarginine mark. Positions glutamate 35–proline 44 are enriched in basic and acidic residues.

Belongs to the UPF0696 family.

The chain is UPF0696 protein C11orf68 (C11orf68) from Homo sapiens (Human).